A 396-amino-acid polypeptide reads, in one-letter code: 1-deoxy-D-xylulose 5-phosphate reductoisomerase (396 aa).

The NADPH site is built by Thr-15, Gly-16, Ser-17, Ile-18, Gly-41, and Asn-130. 1-deoxy-D-xylulose 5-phosphate is bound at residue Lys-131. Glu-132 provides a ligand contact to NADPH. Asp-155 serves as a coordination point for Mn(2+). 1-deoxy-D-xylulose 5-phosphate-binding residues include Ser-156, Glu-157, Ser-181, and His-204. Position 157 (Glu-157) interacts with Mn(2+). Residue Gly-210 participates in NADPH binding. 4 residues coordinate 1-deoxy-D-xylulose 5-phosphate: Ser-217, Asn-222, Lys-223, and Glu-226. Glu-226 is a binding site for Mn(2+).

This sequence belongs to the DXR family. The cofactor is Mg(2+). It depends on Mn(2+) as a cofactor.

It catalyses the reaction 2-C-methyl-D-erythritol 4-phosphate + NADP(+) = 1-deoxy-D-xylulose 5-phosphate + NADPH + H(+). Its pathway is isoprenoid biosynthesis; isopentenyl diphosphate biosynthesis via DXP pathway; isopentenyl diphosphate from 1-deoxy-D-xylulose 5-phosphate: step 1/6. Catalyzes the NADPH-dependent rearrangement and reduction of 1-deoxy-D-xylulose-5-phosphate (DXP) to 2-C-methyl-D-erythritol 4-phosphate (MEP). The polypeptide is 1-deoxy-D-xylulose 5-phosphate reductoisomerase (Bifidobacterium longum subsp. infantis (strain ATCC 15697 / DSM 20088 / JCM 1222 / NCTC 11817 / S12)).